Here is a 602-residue protein sequence, read N- to C-terminus: Elongation factor 4 (602 aa).

The region spanning 7 to 189 (DKIRNFSIVA…AIVTRLPPPK (183 aa)) is the tr-type G domain. GTP-binding positions include 19 to 24 (DHGKST) and 136 to 139 (NKVD).

It belongs to the TRAFAC class translation factor GTPase superfamily. Classic translation factor GTPase family. LepA subfamily.

It is found in the cell inner membrane. The catalysed reaction is GTP + H2O = GDP + phosphate + H(+). Required for accurate and efficient protein synthesis under certain stress conditions. May act as a fidelity factor of the translation reaction, by catalyzing a one-codon backward translocation of tRNAs on improperly translocated ribosomes. Back-translocation proceeds from a post-translocation (POST) complex to a pre-translocation (PRE) complex, thus giving elongation factor G a second chance to translocate the tRNAs correctly. Binds to ribosomes in a GTP-dependent manner. This chain is Elongation factor 4, found in Caulobacter vibrioides (strain NA1000 / CB15N) (Caulobacter crescentus).